Consider the following 726-residue polypeptide: Myb-like protein Z (726 aa).

4 disordered regions span residues 15–109 (DSND…SLSN), 124–149 (ASPSKSSENSPTIHTSSLSPNSYHPY), 161–239 (HYVS…TKQQ), and 272–303 (LIPSSPTRSPSGGSGSESEENDGESSPNNMRS). Residues 18 to 39 (DNNNNNNNNNNSNNNNNNNNNN) are compositionally biased toward low complexity. Residues 45-80 (SSATSSPTGQDSTIDRPNSPSSSIKFTYPSKNSIVT) show a composition bias toward polar residues. Residues 81–108 (SPSSLQLPSPSFSSSSSSSSSSSSSSLS) are compositionally biased toward low complexity. Polar residues predominate over residues 124–147 (ASPSKSSENSPTIHTSSLSPNSYH). Low complexity predominate over residues 165-177 (NNNNNNNNNNNNN). Polar residues predominate over residues 183 to 209 (SSELYNTSPSISSKTTPNGSSTNNSPF). Over residues 221-239 (NNNNNNNNDRNENNTTKQQ) the composition is skewed to low complexity. Residues 329 to 388 (IPIATRKLWSQEECCRLLEMVFQRDPQSVTSKESELRWRSIASTLGRTVTSTRKKYMRLM) form the Myb-like domain. Positions 516-651 (KQIQQQQKQK…NNNYRSSLSP (136 aa)) are enriched in low complexity. The disordered stretch occupies residues 516–726 (KQIQQQQKQK…NNNNYNNYHN (211 aa)). Over residues 661 to 675 (QSPQQKSNNENQQNF) the composition is skewed to polar residues. Low complexity predominate over residues 709–726 (NLNNNNNNNNNNYNNYHN).

The polypeptide is Myb-like protein Z (mybZ) (Dictyostelium discoideum (Social amoeba)).